We begin with the raw amino-acid sequence, 466 residues long: Ribulose bisphosphate carboxylase large chain (466 aa).

Lys-5 is subject to N6,N6,N6-trimethyllysine. Residues Asn-114 and Thr-164 each coordinate substrate. Catalysis depends on Lys-166, which acts as the Proton acceptor. Residue Lys-168 participates in substrate binding. Lys-192, Asp-194, and Glu-195 together coordinate Mg(2+). Position 192 is an N6-carboxylysine (Lys-192). His-285 functions as the Proton acceptor in the catalytic mechanism. Substrate-binding residues include Arg-286, His-318, and Ser-370.

It belongs to the RuBisCO large chain family. Type I subfamily. Heterohexadecamer of 8 large chains and 8 small chains; disulfide-linked. The disulfide link is formed within the large subunit homodimers. It depends on Mg(2+) as a cofactor. In terms of processing, the disulfide bond which can form in the large chain dimeric partners within the hexadecamer appears to be associated with oxidative stress and protein turnover.

The protein localises to the plastid. Its subcellular location is the chloroplast. The catalysed reaction is 2 (2R)-3-phosphoglycerate + 2 H(+) = D-ribulose 1,5-bisphosphate + CO2 + H2O. It catalyses the reaction D-ribulose 1,5-bisphosphate + O2 = 2-phosphoglycolate + (2R)-3-phosphoglycerate + 2 H(+). Functionally, ruBisCO catalyzes two reactions: the carboxylation of D-ribulose 1,5-bisphosphate, the primary event in carbon dioxide fixation, as well as the oxidative fragmentation of the pentose substrate in the photorespiration process. Both reactions occur simultaneously and in competition at the same active site. The polypeptide is Ribulose bisphosphate carboxylase large chain (Drosera filiformis (Thread-leaved sundew)).